The primary structure comprises 189 residues: Large ribosomal subunit protein uL6 (189 aa).

The protein belongs to the universal ribosomal protein uL6 family. As to quaternary structure, part of the 50S ribosomal subunit.

This protein binds to the 23S rRNA, and is important in its secondary structure. It is located near the subunit interface in the base of the L7/L12 stalk, and near the tRNA binding site of the peptidyltransferase center. This is Large ribosomal subunit protein uL6 from Microcystis aeruginosa (strain NIES-843 / IAM M-2473).